A 713-amino-acid chain; its full sequence is Forkhead box protein P2 (713 aa).

Positions 1 to 28 (MMQESATETISNSSMNQNGMSTLSSQLD) are enriched in polar residues. 2 disordered regions span residues 1–44 (MMQE…SSEV) and 283–337 (KHGG…TGAS). Over residues 290-303 (TTNNSSSTTSSTTS) the composition is skewed to low complexity. A compositionally biased stretch (polar residues) spans 313–322 (SIVNGQSSVL). The segment covering 324-335 (ARRDSSSHEETG) has biased composition (basic and acidic residues). A C2H2-type zinc finger spans residues 344–369 (GVCKWPGCESICEDFGQFLKHLNNEH). The leucine-zipper stretch occupies residues 386–407 (VQQLEIQLSKERERLQAMMTHL). Positions 420 to 424 (PLNLV) are CTBP1-binding. A compositionally biased stretch (low complexity) spans 436 to 457 (TSPQSLPQTPTTPTAPVTPITQ). A disordered region spans residues 436-463 (TSPQSLPQTPTTPTAPVTPITQGPSVIT). The segment at residues 502–592 (RPPFTYATLI…SQKITGSPTL (91 aa)) is a DNA-binding region (fork-head). Disordered stretches follow at residues 647-666 (LDHI…QPHI) and 676-713 (VIAE…EDLE). The span at 697 to 713 (LEDDREIEEEPLSEDLE) shows a compositional bias: acidic residues.

Forms homodimers and heterodimers with FOXP1 and FOXP4. Dimerization is required for DNA-binding. Interacts with CTBP1. Interacts with FOXP1. Interacts with TBR1. Interacts with ZMYM2.

Its subcellular location is the nucleus. In terms of biological role, transcriptional repressor that may play a role in the specification and differentiation of lung epithelium. May also play a role in developing neural, gastrointestinal and cardiovascular tissues. Can act with CTBP1 to synergistically repress transcription but CTPBP1 is not essential. Plays a role in synapse formation by regulating SRPX2 levels. This is Forkhead box protein P2 (FOXP2) from Gorilla gorilla gorilla (Western lowland gorilla).